Consider the following 315-residue polypeptide: Aspartate carbamoyltransferase catalytic subunit (315 aa).

The carbamoyl phosphate site is built by R64 and T65. K93 serves as a coordination point for L-aspartate. R114, H142, and Q145 together coordinate carbamoyl phosphate. L-aspartate contacts are provided by R175 and R237. Residues L276 and P277 each coordinate carbamoyl phosphate.

This sequence belongs to the aspartate/ornithine carbamoyltransferase superfamily. ATCase family. In terms of assembly, heterooligomer of catalytic and regulatory chains.

It catalyses the reaction carbamoyl phosphate + L-aspartate = N-carbamoyl-L-aspartate + phosphate + H(+). Its pathway is pyrimidine metabolism; UMP biosynthesis via de novo pathway; (S)-dihydroorotate from bicarbonate: step 2/3. Its function is as follows. Catalyzes the condensation of carbamoyl phosphate and aspartate to form carbamoyl aspartate and inorganic phosphate, the committed step in the de novo pyrimidine nucleotide biosynthesis pathway. This Thermofilum pendens (strain DSM 2475 / Hrk 5) protein is Aspartate carbamoyltransferase catalytic subunit.